Reading from the N-terminus, the 851-residue chain is DNA mismatch repair protein MutS (851 aa).

Residue 602 to 609 participates in ATP binding; that stretch reads GPNMSGKS.

It belongs to the DNA mismatch repair MutS family.

Functionally, this protein is involved in the repair of mismatches in DNA. It is possible that it carries out the mismatch recognition step. This protein has a weak ATPase activity. This chain is DNA mismatch repair protein MutS, found in Streptococcus pyogenes serotype M12 (strain MGAS2096).